The sequence spans 309 residues: HPr kinase/phosphorylase (309 aa).

Catalysis depends on residues His-138 and Lys-159. 153–160 is an ATP binding site; the sequence is GDSGIGKS. Ser-160 is a binding site for Mg(2+). Residue Asp-177 is the Proton acceptor; for phosphorylation activity. Proton donor; for dephosphorylation activity of the active site. The tract at residues 201–210 is important for the catalytic mechanism of both phosphorylation and dephosphorylation; that stretch reads LEIRGVGIID. Glu-202 contacts Mg(2+). Arg-243 is a catalytic residue. An important for the catalytic mechanism of dephosphorylation region spans residues 264–269; the sequence is PVKTGR.

The protein belongs to the HPrK/P family. As to quaternary structure, homohexamer. The cofactor is Mg(2+).

The catalysed reaction is [HPr protein]-L-serine + ATP = [HPr protein]-O-phospho-L-serine + ADP + H(+). The enzyme catalyses [HPr protein]-O-phospho-L-serine + phosphate + H(+) = [HPr protein]-L-serine + diphosphate. Catalyzes the ATP- as well as the pyrophosphate-dependent phosphorylation of a specific serine residue in HPr, a phosphocarrier protein of the phosphoenolpyruvate-dependent sugar phosphotransferase system (PTS). HprK/P also catalyzes the pyrophosphate-producing, inorganic phosphate-dependent dephosphorylation (phosphorolysis) of seryl-phosphorylated HPr (P-Ser-HPr). The two antagonistic activities of HprK/P are regulated by several intracellular metabolites, which change their concentration in response to the absence or presence of rapidly metabolisable carbon sources (glucose, fructose, etc.) in the growth medium. Therefore, by controlling the phosphorylation state of HPr, HPrK/P is a sensor enzyme that plays a major role in the regulation of carbon metabolism and sugar transport: it mediates carbon catabolite repression (CCR), and regulates PTS-catalyzed carbohydrate uptake and inducer exclusion. This is HPr kinase/phosphorylase from Streptococcus thermophilus (strain CNRZ 1066).